A 424-amino-acid polypeptide reads, in one-letter code: Arginine ADP-riboxanase OspC4 (424 aa).

Positions 85, 86, 87, 91, 104, 114, 130, 148, 153, 173, and 268 each coordinate NAD(+). Glutamate 268 is an active-site residue. ANK repeat units lie at residues 311-340, 355-386, and 393-422; these read MAHQ…FTKQ, NLYD…DVNK, and SGDT…GIRQ.

This sequence belongs to the OspC family.

It localises to the secreted. It is found in the host cytoplasm. It carries out the reaction L-arginyl-[protein] + NAD(+) = ADP-riboxanated L-argininyl-[protein] + nicotinamide + NH4(+) + H(+). ADP-riboxanase effector that mediates arginine ADP-riboxanation of host caspase CASP4/CASP11, thereby inhibiting pyroptosis. The chain is Arginine ADP-riboxanase OspC4 from Shigella flexneri.